Reading from the N-terminus, the 403-residue chain is Lissencephaly-1 homolog 1 (403 aa).

Residues 7–38 (QRDELNQAIHQYLLISYQQSAQLFKTEAAVKD) enclose the LisH domain. A coiled-coil region spans residues 51–87 (NSIVRLSKRVITLEQQVEQLNEQLAQAQAGKIQFNKS). 7 WD repeats span residues 103 to 142 (GHRAGVNCVAFHPQYQILGSASDDGSIKLWDYESGHFEKT), 145 to 184 (GHTSNVNCLAFDPTGKYICSASSDLSIKIWELKNHTCVKT), 187 to 226 (GHEHSVSTVQFSDHGDFILSASRDKNIKLWEVATGFCKKT), 229 to 270 (EHQE…HQLS), 271 to 327 (GHEH…NLFT), 330 to 369 (GHDNWVNGVSFHPDGVHMLSVSDDKTIRVWNLKEQKQKKK), and 373 to 403 (AHDKFILKCEINKFIFATCSVDQTIKLWLLS).

The protein belongs to the WD repeat LIS1/nudF family.

The protein resides in the cytoplasm. It is found in the cytoskeleton. The protein localises to the microtubule organizing center. Its subcellular location is the centrosome. Functionally, positively regulates the activity of the minus-end directed microtubule motor protein dynein. May enhance dynein-mediated microtubule sliding by targeting dynein to the microtubule plus end. Required for several dynein- and microtubule-dependent processes. This chain is Lissencephaly-1 homolog 1, found in Paramecium tetraurelia.